Consider the following 461-residue polypeptide: Phenolic glucoside malonyltransferase 1 (461 aa).

His-167 acts as the Proton acceptor in catalysis. An HXXXD motif motif is present at residues 167–171 (HAAQD). A malonyl-CoA-binding site is contributed by 281 to 282 (ST). The active-site Proton acceptor is the Asp-400. The DFGWG motif motif lies at 400–404 (DFGWG).

The protein belongs to the plant acyltransferase family. Phenolic glucoside malonyltransferase subfamily. As to expression, expressed in all tissues. Most highly expressed in the abdomen and especially in the gut.

The enzyme catalyses a flavonol 3-O-beta-D-glucoside + malonyl-CoA = a flavonol 3-O-(6-O-malonyl-beta-D-glucoside) + CoA. It carries out the reaction kaempferol 3-O-beta-D-glucoside + malonyl-CoA = kaempferol 3-O-(6-O-malonyl-beta-D-glucoside) + CoA. It catalyses the reaction quercetin 3-O-beta-D-glucoside + malonyl-CoA = quercetin 3-O-(6-O-malonyl-beta-D-glucoside) + CoA. The catalysed reaction is a flavonol 7-O-beta-D-glucoside + malonyl-CoA = a flavonol 7-O-(6-O-malonyl-beta-D-glucoside) + CoA. The enzyme catalyses (2S)-naringenin 7-O-beta-D-glucoside + malonyl-CoA = (2S)-naringenin 7-O-(6-O-malonyl-beta-D-glucoside) + CoA. It carries out the reaction kaempferol 7-O-beta-D-glucoside + malonyl-CoA = kaempferol 7-O-(6-O-malonyl-beta-D-glucoside) + CoA. It catalyses the reaction apigenin 7-O-beta-D-glucoside + malonyl-CoA = apigenin 7-O-(6-O-malonyl-beta-D-glucoside) + CoA. The catalysed reaction is rhaponticin + malonyl-CoA = 6-O-malonyl-rhaponticin + CoA. Phenolic glucoside malonyltransferase that neutralizes phenolic glycosides in host plants. Catalyzes the transfer of a malonyl group from malonyl-CoA to the phenolic glycosides, leading to their detoxification. Phenolic glycosides, which are among the most abundant plant secondary metabolites, act as plant defense compounds: they strongly affect growth, development and behavior of insect herbivores. Has malonyltransferase activity against flavonoids kaempferol 3-O-glucoside, kaempferol 7-O-glucoside, isoquercetin (quercetin 3-O-beta-D-glucopyranoside), apigetrin (apigenin 7-O-beta-D-glucoside) and prunin (naringenin 7-O-beta-D-glucoside). Also has activity toward non-flavonoid rhaponticin, but with lower efficiency. This is Phenolic glucoside malonyltransferase 1 from Bemisia tabaci (Sweetpotato whitefly).